The following is a 398-amino-acid chain: Cytochrome b (398 aa).

Residues 45–65 (LGSIAGIALVIQIITGVILAM) form a helical membrane-spanning segment. Heme b is bound by residues His-95 and His-109. The next 9 helical transmembrane spans lie at 96–116 (AVGA…GLYY), 129–149 (IGII…VLPW), 164–184 (FSAI…GFSV), 192–212 (FFAL…LHLV), 245–265 (FVGF…APNY), 277–297 (PLVT…YAIL), 304–324 (LGGV…PWLD), 339–359 (IAFW…SKPV), and 366–386 (ISRF…PLIG). Heme b is bound by residues His-196 and His-210.

Belongs to the cytochrome b family. As to quaternary structure, the main subunits of complex b-c1 are: cytochrome b, cytochrome c1 and the Rieske protein. The cofactor is heme b.

Its subcellular location is the cell membrane. Component of the ubiquinol-cytochrome c reductase complex (complex III or cytochrome b-c1 complex), which is a respiratory chain that generates an electrochemical potential coupled to ATP synthesis. This is Cytochrome b (petB) from Rickettsia prowazekii (strain Madrid E).